We begin with the raw amino-acid sequence, 34 residues long: Photosystem II reaction center protein M (34 aa).

A helical membrane pass occupies residues 5–25 (ILAFIATALFILIPTAFSLIL).

This sequence belongs to the PsbM family. In terms of assembly, PSII is composed of 1 copy each of membrane proteins PsbA, PsbB, PsbC, PsbD, PsbE, PsbF, PsbH, PsbI, PsbJ, PsbK, PsbL, PsbM, PsbT, PsbX, PsbY, PsbZ, Psb30/Ycf12, at least 3 peripheral proteins of the oxygen-evolving complex and a large number of cofactors. It forms dimeric complexes.

The protein localises to the plastid. The protein resides in the chloroplast thylakoid membrane. In terms of biological role, one of the components of the core complex of photosystem II (PSII). PSII is a light-driven water:plastoquinone oxidoreductase that uses light energy to abstract electrons from H(2)O, generating O(2) and a proton gradient subsequently used for ATP formation. It consists of a core antenna complex that captures photons, and an electron transfer chain that converts photonic excitation into a charge separation. This subunit is found at the monomer-monomer interface. The sequence is that of Photosystem II reaction center protein M from Huperzia lucidula (Shining clubmoss).